The sequence spans 590 residues: Dystrobrevin-1 (590 aa).

Over residues 1–10 (MLWSNGGGGP) the composition is skewed to gly residues. Residues 1 to 25 (MLWSNGGGGPREPSSAPSPDHHRAM) are disordered. Residues 259-315 (YHPVVCDACQVRSFTGFRYKCQRCANYQLCQSCFWRGRTSQNHSNEHEMKEYSSYKS) form a ZZ-type zinc finger. Residues cysteine 264, cysteine 267, cysteine 279, cysteine 282, cysteine 288, cysteine 291, histidine 301, and histidine 305 each contribute to the Zn(2+) site. Positions 434-508 (SMVGDERTLI…EHLMAQLNTG (75 aa)) form a coiled coil. The essential for interaction with ctn-1 stretch occupies residues 468–590 (DGLAGLRDRK…DENGVTINGF (123 aa)). The interval 484–490 (MFEMQQR) is essential for interaction with dys-1.

The protein belongs to the dystrophin family. Dystrobrevin subfamily. Component of the dystrophin glycoprotein complex (DGC). Interacts with dystrophin (dys-1) and syntrophin (stn-1) to form the DGC. Interacts (via C-terminus) with ctn-1 (via N-terminus); the interaction is required for localization of the dystrophin complex and ctn-1 near dense bodies in muscle cells. As to expression, from late embryogenesis to adulthood, expressed in neurons and muscles; particularly strong in the ventral nerve cord and in muscles of the body wall, head pharyngeal, and vulva; weaker in the intestinal muscle (at protein level).

It is found in the cytoplasm. Plays a role in cholinergic transmission and as a functional partner of dystrophin (dys-1), necessary for muscle maintenance. Required for localization of ctn-1 near dense bodies in muscle cells. This Caenorhabditis elegans protein is Dystrobrevin-1.